The sequence spans 216 residues: Ribose-5-phosphate isomerase A (216 aa).

Residues 26–29 (TGST), 79–82 (DGAD), and 92–95 (KGGG) contribute to the substrate site. The Proton acceptor role is filled by E101. Position 119 (K119) interacts with substrate.

This sequence belongs to the ribose 5-phosphate isomerase family. Homodimer.

It catalyses the reaction aldehydo-D-ribose 5-phosphate = D-ribulose 5-phosphate. Its pathway is carbohydrate degradation; pentose phosphate pathway; D-ribose 5-phosphate from D-ribulose 5-phosphate (non-oxidative stage): step 1/1. Its function is as follows. Catalyzes the reversible conversion of ribose-5-phosphate to ribulose 5-phosphate. The polypeptide is Ribose-5-phosphate isomerase A (Legionella pneumophila (strain Corby)).